Here is a 220-residue protein sequence, read N- to C-terminus: Large ribosomal subunit protein uL3 (220 aa).

The interval 61–81 (KGSKSNKYANKPAEGHAKKAD) is disordered.

The protein belongs to the universal ribosomal protein uL3 family. As to quaternary structure, part of the 50S ribosomal subunit. Forms a cluster with proteins L14 and L19.

Functionally, one of the primary rRNA binding proteins, it binds directly near the 3'-end of the 23S rRNA, where it nucleates assembly of the 50S subunit. The polypeptide is Large ribosomal subunit protein uL3 (Staphylococcus epidermidis (strain ATCC 35984 / DSM 28319 / BCRC 17069 / CCUG 31568 / BM 3577 / RP62A)).